A 241-amino-acid chain; its full sequence is Neuromodulin (241 aa).

Positions 1–26 (TKQVEKNEDGDQKIEQDGIKPEDKAH) are enriched in basic and acidic residues. The disordered stretch occupies residues 1–241 (TKQVEKNEDG…EESKADQENA (241 aa)). The 30-residue stretch at 25 to 54 (AHKAATKIQASFRGHITRKKLKGEKKGDAP) folds into the IQ domain. Composition is skewed to low complexity over residues 80–95 (APAA…AQQE) and 118–131 (SEQP…PAAS). 2 stretches are compositionally biased toward basic and acidic residues: residues 132-147 (SEEK…REST) and 159-171 (KADE…EPKQ). Over residues 172–198 (ADVPAADTTATTTPAAEDATAKATAQP) the composition is skewed to low complexity. Composition is skewed to basic and acidic residues over residues 208–220 (TEEK…ETKP) and 232–241 (EESKADQENA).

It belongs to the neuromodulin family. In terms of assembly, binds calmodulin with a greater affinity in the absence of Ca(2+) than in its presence. Palmitoylated. Palmitoylation is essential for plasma membrane association.

The protein resides in the cell membrane. Its subcellular location is the cell projection. It localises to the growth cone membrane. The protein localises to the synapse. It is found in the filopodium membrane. Functionally, this protein is associated with nerve growth. It is a major component of the motile 'growth cones' that form the tips of elongating axons. Plays a role in axonal and dendritic filopodia induction. This Serinus canaria (Island canary) protein is Neuromodulin (GAP43).